We begin with the raw amino-acid sequence, 438 residues long: Hydrogenobyrinate a,c-diamide synthase (438 aa).

The 192-residue stretch at 247-438 (RIALAEDAAF…TFFHAIAKGG (192 aa)) folds into the GATase cobBQ-type domain. Cys329 acts as the Nucleophile in catalysis.

This sequence belongs to the CobB/CbiA family. The cofactor is Mg(2+).

It carries out the reaction hydrogenobyrinate + 2 L-glutamine + 2 ATP + 2 H2O = hydrogenobyrinate a,c-diamide + 2 L-glutamate + 2 ADP + 2 phosphate + 2 H(+). It participates in cofactor biosynthesis; adenosylcobalamin biosynthesis; cob(II)yrinate a,c-diamide from precorrin-2 (aerobic route): step 9/10. Catalyzes the ATP-dependent amidation of the two carboxylate groups at positions a and c of hydrogenobyrinate, using either L-glutamine or ammonia as the nitrogen source. The chain is Hydrogenobyrinate a,c-diamide synthase from Agrobacterium fabrum (strain C58 / ATCC 33970) (Agrobacterium tumefaciens (strain C58)).